The sequence spans 164 residues: ATP synthase B' chain, cyanelle (164 aa).

A helical transmembrane segment spans residues 26–46 (ATLPVMMVQLLVLMLILNAVF).

Belongs to the ATPase B chain family. F-type ATPases have 2 components, F(1) - the catalytic core - and F(0) - the membrane proton channel. F(1) has five subunits: alpha(3), beta(3), gamma(1), delta(1), epsilon(1). F(0) has four main subunits: a(1), b(1), b'(1) and c(10-14). The alpha and beta chains form an alternating ring which encloses part of the gamma chain. F(1) is attached to F(0) by a central stalk formed by the gamma and epsilon chains, while a peripheral stalk is formed by the delta, b and b' chains.

It localises to the plastid. The protein resides in the cyanelle thylakoid membrane. F(1)F(0) ATP synthase produces ATP from ADP in the presence of a proton or sodium gradient. F-type ATPases consist of two structural domains, F(1) containing the extramembraneous catalytic core and F(0) containing the membrane proton channel, linked together by a central stalk and a peripheral stalk. During catalysis, ATP synthesis in the catalytic domain of F(1) is coupled via a rotary mechanism of the central stalk subunits to proton translocation. Its function is as follows. Component of the F(0) channel, it forms part of the peripheral stalk, linking F(1) to F(0). The b'-subunit is a diverged and duplicated form of b found in plants and photosynthetic bacteria. In Cyanophora paradoxa, this protein is ATP synthase B' chain, cyanelle.